Consider the following 997-residue polypeptide: Malignant fibrous histiocytoma-amplified sequence 1 homolog (997 aa).

14 LRR repeats span residues Ser32–Gly53, Asp54–Ser76, Asn79–Leu100, Arg102–Leu123, Lys125–Leu146, Asp148–Pro170, Ser171–Val192, Ala194–Met216, Ser218–Leu239, Asn241–Leu262, Lys264–Val286, Asp287–Met308, Lys310–Leu331, and Phe333–Leu354. The Roc domain occupies Gln393 to Arg626. Residues Pro637–Ile861 form the COR domain.

Its subcellular location is the cytoplasm. In terms of biological role, probable GTP-binding protein. Functions in innate immunity and more specifically the inflammatory response as a regulator of the Toll-like receptor TLR2 and TLR4 signaling pathways. This is Malignant fibrous histiocytoma-amplified sequence 1 homolog (mfhas1) from Xenopus tropicalis (Western clawed frog).